A 71-amino-acid chain; its full sequence is Arrestin-D (71 aa).

It belongs to the arrestin family. In terms of tissue distribution, adrenal, cerebral cortex, heart, liver, lung, pituitary and testis.

This chain is Arrestin-D (Dar), found in Rattus norvegicus (Rat).